The chain runs to 558 residues: Dihydroxy-acid dehydratase (558 aa).

A [2Fe-2S] cluster-binding site is contributed by Cys-48. A Mg(2+)-binding site is contributed by Asp-80. Cys-121 lines the [2Fe-2S] cluster pocket. 2 residues coordinate Mg(2+): Asp-122 and Lys-123. Residue Lys-123 is modified to N6-carboxylysine. Cys-193 lines the [2Fe-2S] cluster pocket. Glu-445 provides a ligand contact to Mg(2+). Catalysis depends on Ser-471, which acts as the Proton acceptor.

This sequence belongs to the IlvD/Edd family. In terms of assembly, homodimer. [2Fe-2S] cluster serves as cofactor. Requires Mg(2+) as cofactor.

The catalysed reaction is (2R)-2,3-dihydroxy-3-methylbutanoate = 3-methyl-2-oxobutanoate + H2O. It carries out the reaction (2R,3R)-2,3-dihydroxy-3-methylpentanoate = (S)-3-methyl-2-oxopentanoate + H2O. It functions in the pathway amino-acid biosynthesis; L-isoleucine biosynthesis; L-isoleucine from 2-oxobutanoate: step 3/4. Its pathway is amino-acid biosynthesis; L-valine biosynthesis; L-valine from pyruvate: step 3/4. Functions in the biosynthesis of branched-chain amino acids. Catalyzes the dehydration of (2R,3R)-2,3-dihydroxy-3-methylpentanoate (2,3-dihydroxy-3-methylvalerate) into 2-oxo-3-methylpentanoate (2-oxo-3-methylvalerate) and of (2R)-2,3-dihydroxy-3-methylbutanoate (2,3-dihydroxyisovalerate) into 2-oxo-3-methylbutanoate (2-oxoisovalerate), the penultimate precursor to L-isoleucine and L-valine, respectively. The protein is Dihydroxy-acid dehydratase of Prochlorococcus marinus (strain SARG / CCMP1375 / SS120).